Here is a 548-residue protein sequence, read N- to C-terminus: Biotin-dependent acetyl-/propionyl-coenzyme A carboxylase beta5 subunit (548 aa).

The disordered stretch occupies residues 1 to 23 (MTSVTDRSAHSAERSTEHTIDIH). Residues 7–21 (RSAHSAERSTEHTID) show a composition bias toward basic and acidic residues. Positions 25 to 281 (TAGKLAELHK…NNSTDAPRYQ (257 aa)) constitute a CoA carboxyltransferase N-terminal domain. The CoA carboxyltransferase C-terminal domain maps to 295–541 (DEDLELDTLI…ERKIAQLPPK (247 aa)).

It belongs to the AccD/PCCB family. Forms homohexamers. The biotin-dependent acyl-CoA carboxylase complex is composed of AccA3, which contains the biotin carboxylase (BC) and biotin carboxyl carrier protein (BCCP) domains, and AccD5, which contains the carboxyl transferase (CT) domain. The AccA3/AccD5 complex forms a dodecamer, and can associate with the epsilon subunit AccE5 (Rv3280), which stimulates carboxylation by the complex. Is also part of the long-chain acyl-CoA carboxylase (LCC) complex, which is composed of AccA3, AccD4, AccD5 and AccE5. The four subunits are essential for activity, but AccD5, together with AccE5, probably plays a structural role rather than a catalytic one.

The enzyme catalyses N(6)-carboxybiotinyl-L-lysyl-[protein] + acetyl-CoA = N(6)-biotinyl-L-lysyl-[protein] + malonyl-CoA. The catalysed reaction is N(6)-carboxybiotinyl-L-lysyl-[protein] + propanoyl-CoA = methylmalonyl-CoA + N(6)-biotinyl-L-lysyl-[protein]. It participates in lipid metabolism; mycolic acid biosynthesis. Carboxylase activity of the AccA3/AccD5 complex is stimulated by interaction with AccE5. Functionally, component of a biotin-dependent acyl-CoA carboxylase complex. This subunit transfers the CO2 from carboxybiotin to the CoA ester substrate. When associated with the alpha3 subunit AccA3, is involved in the carboxylation of acetyl-CoA and propionyl-CoA, with a preference for propionyl-CoA. Is also required for the activity of the long-chain acyl-CoA carboxylase (LCC) complex. This Mycobacterium tuberculosis (strain ATCC 25618 / H37Rv) protein is Biotin-dependent acetyl-/propionyl-coenzyme A carboxylase beta5 subunit.